Consider the following 498-residue polypeptide: ATP synthase subunit beta, chloroplastic (498 aa).

A Phosphothreonine modification is found at Thr-6. Phosphoserine is present on Ser-13. 172–179 (GGAGVGKT) is an ATP binding site.

The protein belongs to the ATPase alpha/beta chains family. F-type ATPases have 2 components, CF(1) - the catalytic core - and CF(0) - the membrane proton channel. CF(1) has five subunits: alpha(3), beta(3), gamma(1), delta(1), epsilon(1). CF(0) has four main subunits: a(1), b(1), b'(1) and c(9-12).

The protein resides in the plastid. Its subcellular location is the chloroplast thylakoid membrane. It catalyses the reaction ATP + H2O + 4 H(+)(in) = ADP + phosphate + 5 H(+)(out). In terms of biological role, produces ATP from ADP in the presence of a proton gradient across the membrane. The catalytic sites are hosted primarily by the beta subunits. This is ATP synthase subunit beta, chloroplastic from Nasturtium officinale (Watercress).